The sequence spans 62 residues: Cobrotoxin II (62 aa).

Positions 1–16 (LECHNQQSSQTPTTTG) are enriched in polar residues. Positions 1 to 23 (LECHNQQSSQTPTTTGCSGGENN) are disordered. Disulfide bonds link Cys-3/Cys-24, Cys-17/Cys-41, Cys-43/Cys-54, and Cys-55/Cys-60.

Belongs to the three-finger toxin family. Short-chain subfamily. Type I alpha-neurotoxin sub-subfamily. As to expression, expressed by the venom gland.

It localises to the secreted. In terms of biological role, binds to muscle nicotinic acetylcholine receptor (nAChR) and inhibit acetylcholine from binding to the receptor, thereby impairing neuromuscular transmission. This chain is Cobrotoxin II, found in Naja kaouthia (Monocled cobra).